Consider the following 433-residue polypeptide: Monodehydroascorbate reductase (433 aa).

FAD is bound by residues 12-15 (GGVS), Glu-39, Arg-46, Lys-51, Ile-94, and 145-146 (RE). NAD(+) is bound by residues 170-176 (GGYIGLE), Glu-194, Arg-200, and Gly-259. 172-176 (YIGLE) provides a ligand contact to NADP(+). 2 residues coordinate NADP(+): Arg-200 and Gly-259. Residue Asp-296 coordinates FAD. NAD(+) is bound at residue 312–313 (EH). 312-313 (EH) is an NADP(+) binding site. Val-314 provides a ligand contact to FAD. Residue Arg-318 coordinates L-ascorbate. Tyr-347 contributes to the FAD binding site. Residue Tyr-347 coordinates NAD(+). An NADP(+)-binding site is contributed by Tyr-347. An L-ascorbate-binding site is contributed by Arg-349.

Belongs to the FAD-dependent oxidoreductase family. It depends on FAD as a cofactor. Expressed at relatively low levels in all tissues examined.

The protein resides in the cytoplasm. It carries out the reaction 2 monodehydro-L-ascorbate radical + NADH + H(+) = 2 L-ascorbate + NAD(+). Its function is as follows. Catalyzes the conversion of monodehydroascorbate to ascorbate, oxidizing NADH in the process. The protein is Monodehydroascorbate reductase of Pisum sativum (Garden pea).